Consider the following 198-residue polypeptide: Probable GTP-binding protein EngB (198 aa).

An EngB-type G domain is found at Asn-21–Gly-195. GTP-binding positions include Gly-29 to Ser-36, Gly-56 to Leu-60, Asp-81 to Gly-84, Thr-151 to Asp-154, and Val-174 to Asn-176. Residues Ser-36 and Thr-58 each coordinate Mg(2+).

This sequence belongs to the TRAFAC class TrmE-Era-EngA-EngB-Septin-like GTPase superfamily. EngB GTPase family. Mg(2+) is required as a cofactor.

Functionally, necessary for normal cell division and for the maintenance of normal septation. The protein is Probable GTP-binding protein EngB of Campylobacter jejuni (strain RM1221).